Consider the following 111-residue polypeptide: Cytochrome bo(3) ubiquinol oxidase subunit 4 (111 aa).

Topologically, residues 1–17 are cytoplasmic; sequence MSSAAHDNHGAGHGSLG. The chain crosses the membrane as a helical span at residues 18-38; it reads SYAIGFVLSVILTAIPFYMVM. The Periplasmic segment spans residues 39–46; sequence DGGFSRHA. Residues 47 to 67 traverse the membrane as a helical segment; sequence TILTMVVLGLVQVVVHLICFL. Residues 68–80 are Cytoplasmic-facing; the sequence is HMNMSSEGRWNVM. A helical transmembrane segment spans residues 81 to 101; sequence AFIFTVIVILLVVGLSLWIIF. Residues 102–111 lie on the Periplasmic side of the membrane; sequence SADMLMMPMP.

Belongs to the cytochrome c oxidase bacterial subunit 4 family. As to quaternary structure, heterooctamer of two A chains, two B chains, two C chains and two D chains.

It is found in the cell inner membrane. In terms of biological role, cytochrome bo(3) ubiquinol terminal oxidase is the component of the aerobic respiratory chain of E.coli that predominates when cells are grown at high aeration. Has proton pump activity across the membrane in addition to electron transfer, pumping 2 protons/electron. The chain is Cytochrome bo(3) ubiquinol oxidase subunit 4 (cyoD) from Pseudomonas aeruginosa (strain ATCC 15692 / DSM 22644 / CIP 104116 / JCM 14847 / LMG 12228 / 1C / PRS 101 / PAO1).